The following is a 100-amino-acid chain: Small ribosomal subunit protein uS14c (100 aa).

It belongs to the universal ribosomal protein uS14 family. Part of the 30S ribosomal subunit.

It localises to the plastid. It is found in the chloroplast. Functionally, binds 16S rRNA, required for the assembly of 30S particles. The protein is Small ribosomal subunit protein uS14c of Huperzia lucidula (Shining clubmoss).